A 174-amino-acid polypeptide reads, in one-letter code: Male-enhanced antigen 1 (174 aa).

Disordered stretches follow at residues 1–77 and 94–123; these read MAAV…PVGD and LHLPDPPLESEDEDEEGATALSNHSSIPMD. Acidic residues-rich tracts occupy residues 38–48, 65–77, and 101–110; these read SSEEPEEEQEE, PEQEEVELAPVGD, and LESEDEDEEG. A Phosphoserine modification is found at serine 103.

May play an important role in spermatogenesis and/or testis development. The protein is Male-enhanced antigen 1 (MEA1) of Sus scrofa (Pig).